The chain runs to 215 residues: Cytidylate kinase (215 aa).

G10 to T18 is a binding site for ATP.

It belongs to the cytidylate kinase family. Type 1 subfamily.

It is found in the cytoplasm. It catalyses the reaction CMP + ATP = CDP + ADP. It carries out the reaction dCMP + ATP = dCDP + ADP. The protein is Cytidylate kinase of Bartonella quintana (strain Toulouse) (Rochalimaea quintana).